A 175-amino-acid chain; its full sequence is ATP synthase subunit delta (175 aa).

Belongs to the ATPase delta chain family. In terms of assembly, F-type ATPases have 2 components, F(1) - the catalytic core - and F(0) - the membrane proton channel. F(1) has five subunits: alpha(3), beta(3), gamma(1), delta(1), epsilon(1). F(0) has three main subunits: a(1), b(2) and c(10-14). The alpha and beta chains form an alternating ring which encloses part of the gamma chain. F(1) is attached to F(0) by a central stalk formed by the gamma and epsilon chains, while a peripheral stalk is formed by the delta and b chains.

Its subcellular location is the cell membrane. Functionally, f(1)F(0) ATP synthase produces ATP from ADP in the presence of a proton or sodium gradient. F-type ATPases consist of two structural domains, F(1) containing the extramembraneous catalytic core and F(0) containing the membrane proton channel, linked together by a central stalk and a peripheral stalk. During catalysis, ATP synthesis in the catalytic domain of F(1) is coupled via a rotary mechanism of the central stalk subunits to proton translocation. Its function is as follows. This protein is part of the stalk that links CF(0) to CF(1). It either transmits conformational changes from CF(0) to CF(1) or is implicated in proton conduction. The sequence is that of ATP synthase subunit delta from Elusimicrobium minutum (strain Pei191).